Here is a 1208-residue protein sequence, read N- to C-terminus: DNA-directed RNA polymerase subunit beta (1208 aa).

It belongs to the RNA polymerase beta chain family. The RNAP catalytic core consists of 2 alpha, 1 beta, 1 beta' and 1 omega subunit. When a sigma factor is associated with the core the holoenzyme is formed, which can initiate transcription.

It catalyses the reaction RNA(n) + a ribonucleoside 5'-triphosphate = RNA(n+1) + diphosphate. In terms of biological role, DNA-dependent RNA polymerase catalyzes the transcription of DNA into RNA using the four ribonucleoside triphosphates as substrates. In Enterococcus faecium (Streptococcus faecium), this protein is DNA-directed RNA polymerase subunit beta.